The sequence spans 597 residues: uncharacterized protein (597 aa).

2 disordered regions span residues 165–197 (NSRAVPPPAPPNPPKMEKHMSHDTSGRGSIFSK) and 278–344 (ERSS…RGTL). A compositionally biased stretch (pro residues) spans 169–178 (VPPPAPPNPP). The span at 179-189 (KMEKHMSHDTS) shows a compositional bias: basic and acidic residues. Positions 293–313 (STEVSITSSSPSPSSSSSTST) are enriched in low complexity. Residues 402–465 (WSLDDVLLWL…LDDLSKIIEN (64 aa)) enclose the SAM domain. The interval 576–597 (EESQQKESSSSGISSSPQTPTE) is disordered. Residues 581 to 597 (KESSSSGISSSPQTPTE) are compositionally biased toward low complexity.

This is an uncharacterized protein from Caenorhabditis elegans.